A 419-amino-acid chain; its full sequence is Diaminopimelate decarboxylase (419 aa).

The residue at position 56 (K56) is an N6-(pyridoxal phosphate)lysine. Pyridoxal 5'-phosphate is bound by residues G234 and 274–277 (EPGR). The substrate site is built by R277, R312, and Y316. C343 serves as the catalytic Proton donor. Substrate-binding residues include E344 and Y372. A pyridoxal 5'-phosphate-binding site is contributed by Y372.

It belongs to the Orn/Lys/Arg decarboxylase class-II family. LysA subfamily. Homodimer. It depends on pyridoxal 5'-phosphate as a cofactor.

The catalysed reaction is meso-2,6-diaminopimelate + H(+) = L-lysine + CO2. It functions in the pathway amino-acid biosynthesis; L-lysine biosynthesis via DAP pathway; L-lysine from DL-2,6-diaminopimelate: step 1/1. Functionally, specifically catalyzes the decarboxylation of meso-diaminopimelate (meso-DAP) to L-lysine. The sequence is that of Diaminopimelate decarboxylase from Archaeoglobus fulgidus (strain ATCC 49558 / DSM 4304 / JCM 9628 / NBRC 100126 / VC-16).